Consider the following 161-residue polypeptide: 2-C-methyl-D-erythritol 2,4-cyclodiphosphate synthase (161 aa).

Residues D10 and H12 each coordinate a divalent metal cation. 4-CDP-2-C-methyl-D-erythritol 2-phosphate contacts are provided by residues 10–12 (DVH) and 36–37 (HS). H44 provides a ligand contact to a divalent metal cation. 4-CDP-2-C-methyl-D-erythritol 2-phosphate-binding positions include 58 to 60 (DIG), 63 to 67 (FSDTD), and R144.

The protein belongs to the IspF family. In terms of assembly, homotrimer. Requires a divalent metal cation as cofactor.

The catalysed reaction is 4-CDP-2-C-methyl-D-erythritol 2-phosphate = 2-C-methyl-D-erythritol 2,4-cyclic diphosphate + CMP. The protein operates within isoprenoid biosynthesis; isopentenyl diphosphate biosynthesis via DXP pathway; isopentenyl diphosphate from 1-deoxy-D-xylulose 5-phosphate: step 4/6. In terms of biological role, involved in the biosynthesis of isopentenyl diphosphate (IPP) and dimethylallyl diphosphate (DMAPP), two major building blocks of isoprenoid compounds. Catalyzes the conversion of 4-diphosphocytidyl-2-C-methyl-D-erythritol 2-phosphate (CDP-ME2P) to 2-C-methyl-D-erythritol 2,4-cyclodiphosphate (ME-CPP) with a corresponding release of cytidine 5-monophosphate (CMP). The chain is 2-C-methyl-D-erythritol 2,4-cyclodiphosphate synthase from Burkholderia ambifaria (strain ATCC BAA-244 / DSM 16087 / CCUG 44356 / LMG 19182 / AMMD) (Burkholderia cepacia (strain AMMD)).